We begin with the raw amino-acid sequence, 131 residues long: Small ribosomal subunit protein bS6 (131 aa).

A disordered region spans residues 98-131 (EASPMVKAKDERRERRDDFANETADDADAGDSEE). Residues 104–116 (KAKDERRERRDDF) show a composition bias toward basic and acidic residues. The span at 120-131 (TADDADAGDSEE) shows a compositional bias: acidic residues.

This sequence belongs to the bacterial ribosomal protein bS6 family.

In terms of biological role, binds together with bS18 to 16S ribosomal RNA. This chain is Small ribosomal subunit protein bS6, found in Citrobacter koseri (strain ATCC BAA-895 / CDC 4225-83 / SGSC4696).